Here is a 512-residue protein sequence, read N- to C-terminus: Ascofuranone/ascochlorin biosynthesis clusters transcription regulator (512 aa).

A DNA-binding region (zn(2)-C6 fungal-type) is located at residues 14–49 (CDRCHSQKLRCPRSVEPEKANPEEPCSRCRKAGVPC). Disordered stretches follow at residues 54–87 (RGKVGRPSKATKKKSARSPRATSTPEAEFPPYDI), 118–148 (GSGSVTTSASPKTMAEDYQPEGQRPFPDPLM), and 325–351 (GCTRSSSRASTTSKGSSMESDEGDGSI). The segment covering 56-70 (KVGRPSKATKKKSAR) has biased composition (basic residues). Low complexity-rich tracts occupy residues 118 to 127 (GSGSVTTSAS) and 327 to 342 (TRSSSRASTTSKGSSM).

Its subcellular location is the nucleus. In terms of biological role, transcription factor that regulates the expression of the asc-1 and asc-2 gene clusters that mediate the biosynthesis of both ascochlorin and ascofuranone, a strong inhibitor of cyanide-insensitive alternative oxidases and a promising drug candidate against African trypanosomiasis. Binds the 5'-CGGYGNNTTW-3' motif within promoters of the target genes. The polypeptide is Ascofuranone/ascochlorin biosynthesis clusters transcription regulator (Acremonium egyptiacum (Oospora egyptiaca)).